The sequence spans 156 residues: ATP synthase subunit b (156 aa).

Residues 12–32 (IAFAIFVWFCVKYVWPPITAA) form a helical membrane-spanning segment.

Belongs to the ATPase B chain family. F-type ATPases have 2 components, F(1) - the catalytic core - and F(0) - the membrane proton channel. F(1) has five subunits: alpha(3), beta(3), gamma(1), delta(1), epsilon(1). F(0) has three main subunits: a(1), b(2) and c(10-14). The alpha and beta chains form an alternating ring which encloses part of the gamma chain. F(1) is attached to F(0) by a central stalk formed by the gamma and epsilon chains, while a peripheral stalk is formed by the delta and b chains.

The protein resides in the cell inner membrane. In terms of biological role, f(1)F(0) ATP synthase produces ATP from ADP in the presence of a proton or sodium gradient. F-type ATPases consist of two structural domains, F(1) containing the extramembraneous catalytic core and F(0) containing the membrane proton channel, linked together by a central stalk and a peripheral stalk. During catalysis, ATP synthesis in the catalytic domain of F(1) is coupled via a rotary mechanism of the central stalk subunits to proton translocation. Functionally, component of the F(0) channel, it forms part of the peripheral stalk, linking F(1) to F(0). This Marinobacter nauticus (strain ATCC 700491 / DSM 11845 / VT8) (Marinobacter aquaeolei) protein is ATP synthase subunit b.